The sequence spans 500 residues: NAD(P)H-quinone oxidoreductase chain 4, chloroplastic (500 aa).

The next 14 membrane-spanning stretches (helical) occupy residues 4–24 (FPWL…IFFL), 35–55 (YTIA…CYHF), 87–107 (LGSI…AWPV), 111–131 (SQLF…LFSS), 134–154 (LLLF…LLSM), 167–187 (FILY…GMGL), 211–231 (ILLY…IPLH), 242–262 (HYST…YGLI), 272–292 (AHYL…IYAA), 313–333 (MGFI…GAIL), 334–354 (QILS…TACD), 386–406 (LALP…GLIT), 417–437 (LITF…LSML), and 462–482 (LFLL…PDFV).

The protein belongs to the complex I subunit 4 family.

The protein resides in the plastid. It is found in the chloroplast thylakoid membrane. It catalyses the reaction a plastoquinone + NADH + (n+1) H(+)(in) = a plastoquinol + NAD(+) + n H(+)(out). The enzyme catalyses a plastoquinone + NADPH + (n+1) H(+)(in) = a plastoquinol + NADP(+) + n H(+)(out). In Saccharum officinarum (Sugarcane), this protein is NAD(P)H-quinone oxidoreductase chain 4, chloroplastic.